The following is a 552-amino-acid chain: Urocanate hydratase (552 aa).

NAD(+) is bound by residues 49–50, Gln-127, 173–175, Asp-193, 239–240, 260–264, 270–271, and Tyr-319; these read GG, GMG, NA, QTSAH, and YI. Residue Cys-407 is part of the active site. Gly-489 is a binding site for NAD(+).

The protein belongs to the urocanase family. It depends on NAD(+) as a cofactor.

Its subcellular location is the cytoplasm. The catalysed reaction is 4-imidazolone-5-propanoate = trans-urocanate + H2O. It participates in amino-acid degradation; L-histidine degradation into L-glutamate; N-formimidoyl-L-glutamate from L-histidine: step 2/3. In terms of biological role, catalyzes the conversion of urocanate to 4-imidazolone-5-propionate. In Bacillus thuringiensis (strain Al Hakam), this protein is Urocanate hydratase.